Consider the following 220-residue polypeptide: MEGVLNFLTNINVIFTLLGYLIGGIPFGYALMKIFYGMDITKIGSGGIGATNVLRALQSKGVSNAKQMALLVLILDLFKGMFAVFLSKLFGLDYSLQWMVAIASILGHCYSPFLNFNGGKGVSTIMGSVVLLIPIESLIGLTVWFFVGKVLKISSLASILGVGTATVLIFFVPYMHIPDSVNILKEVDTQTPMVLIFIFTLIKHAGNIFNLLAGKEKKVL.

6 helical membrane passes run 11 to 31 (INVI…GYAL), 70 to 90 (LLVL…SKLF), 96 to 116 (LQWM…FLNF), 127 to 147 (GSVV…WFFV), 153 to 173 (ISSL…FFVP), and 193 to 213 (MVLI…NLLA).

Belongs to the PlsY family. In terms of assembly, probably interacts with PlsX.

It is found in the cell inner membrane. The catalysed reaction is an acyl phosphate + sn-glycerol 3-phosphate = a 1-acyl-sn-glycero-3-phosphate + phosphate. Its pathway is lipid metabolism; phospholipid metabolism. Its function is as follows. Catalyzes the transfer of an acyl group from acyl-phosphate (acyl-PO(4)) to glycerol-3-phosphate (G3P) to form lysophosphatidic acid (LPA). This enzyme utilizes acyl-phosphate as fatty acyl donor, but not acyl-CoA or acyl-ACP. The protein is Glycerol-3-phosphate acyltransferase of Helicobacter pylori (strain HPAG1).